The sequence spans 184 residues: Ribosome-recycling factor (184 aa).

This sequence belongs to the RRF family.

Its subcellular location is the cytoplasm. Responsible for the release of ribosomes from messenger RNA at the termination of protein biosynthesis. May increase the efficiency of translation by recycling ribosomes from one round of translation to another. This chain is Ribosome-recycling factor, found in Borreliella afzelii (strain PKo) (Borrelia afzelii).